Consider the following 611-residue polypeptide: Nuclear cap-binding protein subunit 3 (611 aa).

A disordered region spans residues 1–44 (MAAVRGLRVSVKAGGGAEPEPMEVEEGEVEAAADRASPREVVSG). Residues 20 to 31 (EPMEVEEGEVEA) show a composition bias toward acidic residues. An RNA recognition motif (RRM) domain region spans residues 108-169 (ETLYVYGVDD…LSSMPTNEKG (62 aa)). A WLDD motif; essential for 7-methylguanosine-containing mRNA cap binding motif is present at residues 137–140 (WLDD). Disordered regions lie at residues 159 to 230 (NLSS…PDTL), 338 to 360 (EEPI…DDRV), 373 to 393 (RERE…EMDY), 423 to 568 (KTIR…DSVL), and 583 to 611 (RQKK…DTDS). Positions 168–179 (KGQRKKDGEHSS) are enriched in basic and acidic residues. 2 stretches are compositionally biased toward acidic residues: residues 196-218 (DETE…DETE) and 339-358 (EPIE…DEDD). Residues 423–439 (KTIRNSMRSDSVGNSVK) are compositionally biased toward polar residues. Basic and acidic residues predominate over residues 446 to 463 (SHAEKPADVRLILEEKRQ). A compositionally biased stretch (low complexity) spans 464-475 (STASRQQSSSGK). Composition is skewed to basic and acidic residues over residues 501–511 (SRREPLSDVHS) and 544–556 (PKDK…KSEK). Positions 602 to 611 (ESSSGSDTDS) are enriched in low complexity.

Belongs to the NCBP3 family. In terms of assembly, component of an alternative cap-binding complex (CBC) composed of NCBP1/CBP80 and NCBP3.

Its subcellular location is the nucleus. The protein localises to the cytoplasm. Functionally, associates with NCBP1/CBP80 to form an alternative cap-binding complex (CBC) which plays a key role in mRNA export. NCBP3 serves as adapter protein linking the capped RNAs (m7GpppG-capped RNA) to NCBP1/CBP80. Unlike the conventional CBC with NCBP2 which binds both small nuclear RNA (snRNA) and messenger (mRNA) and is involved in their export from the nucleus, the alternative CBC with NCBP3 does not bind snRNA and associates only with mRNA thereby playing a role in only mRNA export. The sequence is that of Nuclear cap-binding protein subunit 3 from Xenopus tropicalis (Western clawed frog).